Reading from the N-terminus, the 336-residue chain is NEDD4 family-interacting protein 2 (336 aa).

Disordered stretches follow at residues 1–24 and 37–156; these read MARR…RGAP and SAAA…SITV. Residues 1–231 are Cytoplasmic-facing; it reads MARRRSQRVC…ADQLRVGNDG (231 aa). Positions 37-48 are enriched in low complexity; that stretch reads SAAAAGATGSEE. Residues 78–99 are compositionally biased toward basic and acidic residues; the sequence is EHGEDSLSRKPDPEPGRMDHHQ. The interval 148 to 151 is interaction with NEDD4; the sequence is PPPY. The short motif at 148–151 is the PPxY motif 1 element; that stretch reads PPPY. Phosphotyrosine; by SRC occurs at positions 151, 167, 171, and 177. Short sequence motifs (PPxY motif) lie at residues 174 to 177 and 184 to 186; these read PPPY and PTY. The helical transmembrane segment at 232–252 threads the bilayer; that stretch reads IFMLAFFMAFIFNWLGFCLSF. Topologically, residues 253–257 are extracellular; the sequence is CITNT. The helical transmembrane segment at 258–278 threads the bilayer; that stretch reads IAGRYGAICGFGLSLIKWILI. Over 279–287 the chain is Cytoplasmic; that stretch reads VRFSDYFTG. Residues 288 to 308 form a helical membrane-spanning segment; the sequence is YFNGQYWLWWIFLVLGLLLFF. Residues 309–336 lie on the Extracellular side of the membrane; it reads RGFVNYLKVRNMSESMAAAHRTRYFFLL.

Forms heterodimers with NDFIP1. Interacts with HECT domain-containing E3 ubiquitin-protein ligases, including NEDD4. Interacts with NEDD4L. Interacts with PTEN. When phosphorylated at Tyr-167, interacts with SRC and LYN SH2 domain. May thus act as a scaffold that recruits SRC to NDFIP1, enhancing NDFIP1 phosphorylation. Interacts with SLC11A2/DMT1. May interact with phosphorylated EGFR. Interacts with KCNH2. Ubiquitinated by NEDD4 and ITCH. Also ubiquitinated by NEDD4L. Ubiquitination by NEDD4 or NEDD4L does not affect turnover. In terms of processing, undergoes transient tyrosine-phosphorylation following EGF stimulation, most probably catalyzed by SRC. Phosphorylation on Tyr-151, Tyr-171 and Tyr-177 are dependent on the phosphorylation on Tyr-167. Also phosphorylated by LYN and FYN. Expressed in brain, lung, heart, skeletal muscle, kidney, liver and placenta.

The protein localises to the endosome membrane. It is found in the golgi apparatus membrane. Its subcellular location is the endosome. It localises to the multivesicular body membrane. Activates HECT domain-containing E3 ubiquitin-protein ligases, including ITCH, NEDD4, NEDD4L, SMURF2, WWP1 and WWP2, and consequently modulates the stability of their targets. As a result, may control many cellular processes. Recruits ITCH, NEDD4 and SMURF2 to endosomal membranes. Negatively regulates KCNH2 potassium channel activity by decreasing its cell-surface expression and interfering with channel maturation through recruitment of NEDD4L to the Golgi apparatus and multivesicular body where it mediates KCNH2 degradation. May modulate EGFR signaling. Together with NDFIP1, limits the cytokine signaling and expansion of effector Th2 T-cells by promoting degradation of JAK1, probably by ITCH- and NEDD4L-mediated ubiquitination. This Homo sapiens (Human) protein is NEDD4 family-interacting protein 2 (NDFIP2).